The chain runs to 331 residues: 6-phosphogluconolactonase (331 aa).

N6-acetyllysine is present on lysine 287.

This sequence belongs to the cycloisomerase 2 family.

The enzyme catalyses 6-phospho-D-glucono-1,5-lactone + H2O = 6-phospho-D-gluconate + H(+). It functions in the pathway carbohydrate degradation; pentose phosphate pathway; D-ribulose 5-phosphate from D-glucose 6-phosphate (oxidative stage): step 2/3. Catalyzes the hydrolysis of 6-phosphogluconolactone to 6-phosphogluconate. The polypeptide is 6-phosphogluconolactonase (Escherichia coli O127:H6 (strain E2348/69 / EPEC)).